A 210-amino-acid polypeptide reads, in one-letter code: Large ribosomal subunit protein uL3 (210 aa).

A disordered region spans residues 125–151; that stretch reads HGFGGGPRTHGQSDRLRAPGSIGAGTD.

It belongs to the universal ribosomal protein uL3 family. Part of the 50S ribosomal subunit. Forms a cluster with proteins L14 and L19.

Its function is as follows. One of the primary rRNA binding proteins, it binds directly near the 3'-end of the 23S rRNA, where it nucleates assembly of the 50S subunit. In Roseiflexus sp. (strain RS-1), this protein is Large ribosomal subunit protein uL3.